A 210-amino-acid chain; its full sequence is Glutathione S-transferase P (210 aa).

Residues P2–G81 enclose the GST N-terminal domain. Y4 is modified (phosphotyrosine; by EGFR). Residues Y8, R14, W39, K45, and Q52 to L53 each bind glutathione. Position 62 is a phosphothreonine (T62). Q65–S66 contacts glutathione. The GST C-terminal domain maps to D83–I204. K103 and K116 each carry N6-succinyllysine. K128 is subject to N6-acetyllysine.

The protein belongs to the GST superfamily. Pi family. In terms of assembly, homodimer. Interacts with CDK5.

The protein localises to the cytoplasm. The protein resides in the mitochondrion. It is found in the nucleus. The catalysed reaction is RX + glutathione = an S-substituted glutathione + a halide anion + H(+). It catalyses the reaction prostaglandin J2 + glutathione = prostaglandin J2-S-(R)-glutathione. It carries out the reaction prostaglandin J2 + glutathione = prostaglandin J2-S-(S)-glutathione. The enzyme catalyses prostaglandin A2 + glutathione = prostaglandin A2-S-(S)-glutathione. The catalysed reaction is 11(S)-hydroxy-14(S),15(S)-epoxy-(5Z,8Z,12E)-eicosatrienoate + glutathione = (11S,15S)-dihydroxy-14(R)-S-glutathionyl-(5Z,8Z,12E)-eicosatrienoate. Functionally, conjugation of reduced glutathione to a wide number of exogenous and endogenous hydrophobic electrophiles. Involved in the formation of glutathione conjugates of both prostaglandin A2 (PGA2) and prostaglandin J2 (PGJ2). Participates in the formation of novel hepoxilin regioisomers. Negatively regulates CDK5 activity via p25/p35 translocation to prevent neurodegeneration. The sequence is that of Glutathione S-transferase P (GSTP1) from Pongo abelii (Sumatran orangutan).